We begin with the raw amino-acid sequence, 222 residues long: MSAKWINSIFKSVVLTAALALPFTASAFTEGTDYMVLEKPIPDADKTLIKVFSYACPFCYKYDKAVTGPVADKVADLVTFVPFHLETKGEYGKQASELFAVTMAKDKAAGVSLFDEKSQFKKAKFAWYAAYHDKKERWSDGKDPAAFLKTGLDAAGMSQAEFEAALKEPAVQQTLQKWKAAYEVAKIQGVPAYVVNGKYLIYTKNIKSIDSMAQLVRELATK.

Residues 1–27 (MSAKWINSIFKSVVLTAALALPFTASA) form the signal peptide. Residues 28–221 (FTEGTDYMVL…MAQLVRELAT (194 aa)) enclose the Thioredoxin domain. A disulfide bridge links Cys56 with Cys59.

This sequence belongs to the thioredoxin family. DsbL subfamily. In terms of assembly, interacts with DsbI.

The protein localises to the periplasm. Its function is as follows. Involved in disulfide-bond formation. Acts by transferring its disulfide bond to other proteins. Part of a redox system composed of DsbI and DsbL that mediates formation of an essential disulfide bond in AssT. This chain is Thiol:disulfide interchange protein DsbL, found in Lelliottia amnigena (Enterobacter amnigenus).